Consider the following 144-residue polypeptide: Large ribosomal subunit protein uL11 (144 aa).

Belongs to the universal ribosomal protein uL11 family. In terms of assembly, part of the ribosomal stalk of the 50S ribosomal subunit. Interacts with L10 and the large rRNA to form the base of the stalk. L10 forms an elongated spine to which L12 dimers bind in a sequential fashion forming a multimeric L10(L12)X complex. Post-translationally, one or more lysine residues are methylated.

In terms of biological role, forms part of the ribosomal stalk which helps the ribosome interact with GTP-bound translation factors. The protein is Large ribosomal subunit protein uL11 of Francisella tularensis subsp. holarctica (strain OSU18).